Consider the following 289-residue polypeptide: Caffeoylpyruvate hydrolase (289 aa).

Glutamate 140, glutamate 142, and aspartate 171 together coordinate a divalent metal cation.

It belongs to the FAH family. As to quaternary structure, homodimer. It depends on Mg(2+) as a cofactor. Requires Mn(2+) as cofactor.

The enzyme catalyses (E)-caffeoylpyruvate + H2O = (E)-caffeate + pyruvate + H(+). Its pathway is secondary metabolite biosynthesis. Its function is as follows. Caffeoylpyruvate hydrolase; part of the gene cluster that mediates the fungal bioluminescence cycle. Involved in the recycling of oxyluciferin, a pyruvic acid adduct of caffeic acid, to caffeic acid. The fungal bioluminescence cycle begins with the hispidin synthetase that catalyzes the formation of hispidin which is further hydroxylated by the hispidin-3-hydroxylase, yielding the fungal luciferin 3-hydroxyhispidin. The luciferase then produces an endoperoxide as a high-energy intermediate with decomposition that yields oxyluciferin (also known as caffeoylpyruvate) and light emission. Oxyluciferin can be recycled to caffeic acid by caffeoylpyruvate hydrolase. The sequence is that of Caffeoylpyruvate hydrolase from Neonothopanus nambi (Agaricus nambi).